The chain runs to 325 residues: Melanocortin receptor 5 (325 aa).

Over 1–37 the chain is Extracellular; sequence MNSSFHLHFLDLGLNATEGNLSGLSVRNASSPCEDMG. 4 N-linked (GlcNAc...) asparagine glycosylation sites follow: Asn2, Asn15, Asn20, and Asn28. Residues 38 to 61 traverse the membrane as a helical segment; sequence IAVEVFLALGLISLLENILVIGAI. Topologically, residues 62–73 are cytoplasmic; sequence VRNRNLHIPMYF. The helical transmembrane segment at 74–97 threads the bilayer; it reads FVGSLAVADMLVSLSNFWETITIY. The Extracellular segment spans residues 98-114; sequence LLTNKHLVMADASVRHL. The chain crosses the membrane as a helical span at residues 115 to 138; it reads DNVFDSMICISVVASMCSLLAIAV. Over 139–155 the chain is Cytoplasmic; sequence DRYVTIFCRLRYQRIMT. A helical membrane pass occupies residues 156-179; the sequence is GRRSGAIIAGIWAFCTSCGTVFIV. The Extracellular portion of the chain corresponds to 180–186; the sequence is YYESTYV. The helical transmembrane segment at 187–211 threads the bilayer; it reads VVCLIAMFLTMLLLMASLYTHMFLL. At 212–239 the chain is on the cytoplasmic side; the sequence is ARTHVRRIAALPGHSSVRQRTGVKGAIT. A helical membrane pass occupies residues 240–265; it reads LAMLLGVFIICWAPFFLHLILMISCP. Residues 266–273 are Extracellular-facing; it reads QNLYCSCF. A helical membrane pass occupies residues 274 to 297; it reads MSHFNMYLILIMCNSVIDPLIYAF. Topologically, residues 298-325 are cytoplasmic; it reads RSQEMRKTFKEIVCFQGFRTPCRFPSTY. Cys311 is lipidated: S-palmitoyl cysteine.

Belongs to the G-protein coupled receptor 1 family.

It localises to the cell membrane. Receptor for MSH (alpha, beta and gamma) and ACTH. The activity of this receptor is mediated by G proteins which activate adenylate cyclase. This receptor is a possible mediator of the immunomodulation properties of melanocortins. The chain is Melanocortin receptor 5 (MC5R) from Ovis aries (Sheep).